The chain runs to 273 residues: DnaJ homolog subfamily C member 27-A (273 aa).

Residues 23–30 (GNAEVGKS), 71–75 (DMAGH), and 134–137 (NKID) contribute to the GTP site. The region spanning 217-273 (DSWDMLGVKPGATRDEVNKAYRKLAVLLHPDKCMAPGSEDAFKAVVNARTALLKNIK) is the J domain.

This sequence belongs to the small GTPase superfamily. Rab family.

It localises to the nucleus. GTPase possibly involved in regulation of the MEK/ERK pathway. This chain is DnaJ homolog subfamily C member 27-A (dnajc27-a), found in Xenopus laevis (African clawed frog).